The primary structure comprises 541 residues: Chaperonin GroEL 2 (541 aa).

ATP is bound by residues 30–33 (TLGP), lysine 51, 87–91 (DGTTT), glycine 414, and aspartate 495.

Belongs to the chaperonin (HSP60) family. In terms of assembly, forms a cylinder of 14 subunits composed of two heptameric rings stacked back-to-back. Interacts with the co-chaperonin GroES.

Its subcellular location is the cytoplasm. The catalysed reaction is ATP + H2O + a folded polypeptide = ADP + phosphate + an unfolded polypeptide.. In terms of biological role, together with its co-chaperonin GroES, plays an essential role in assisting protein folding. The GroEL-GroES system forms a nano-cage that allows encapsulation of the non-native substrate proteins and provides a physical environment optimized to promote and accelerate protein folding. This chain is Chaperonin GroEL 2, found in Cereibacter sphaeroides (Rhodobacter sphaeroides).